A 194-amino-acid chain; its full sequence is Small ribosomal subunit protein uS5 (194 aa).

The 64-residue stretch at 26–89 (LEEKVVEIRR…ADAKKHLIRV (64 aa)) folds into the S5 DRBM domain.

The protein belongs to the universal ribosomal protein uS5 family. As to quaternary structure, part of the 30S ribosomal subunit. Contacts proteins S4 and S8.

In terms of biological role, with S4 and S12 plays an important role in translational accuracy. Its function is as follows. Located at the back of the 30S subunit body where it stabilizes the conformation of the head with respect to the body. The chain is Small ribosomal subunit protein uS5 from Persephonella marina (strain DSM 14350 / EX-H1).